A 1149-amino-acid chain; its full sequence is Phytochrome B-2 (1149 aa).

The tract at residues 1 to 48 (MASASGAENSSVPPSPLPPPPPPQIHTSRTKLSHHHHNNNNNNNNNID) is disordered. The span at 13–24 (PPSPLPPPPPPQ) shows a compositional bias: pro residues. Positions 28–38 (SRTKLSHHHHN) are enriched in basic residues. Residues 267 to 449 (DRVMVYRFHE…TQTLLCDMLL (183 aa)) form the GAF domain. Residue Cys-353 participates in phytochromobilin binding. PAS domains are found at residues 641–712 (VARE…LKGE) and 775–846 (DYKA…MIVL). Residues 923 to 1143 (YICQGVKNPL…YVLLELPVTR (221 aa)) form the Histidine kinase domain.

The protein belongs to the phytochrome family. As to quaternary structure, heterodimer between subunit A and subunit B. In terms of processing, contains one covalently linked phytochromobilin chromophore.

Regulatory photoreceptor which exists in two forms that are reversibly interconvertible by light: the Pr form that absorbs maximally in the red region of the spectrum and the Pfr form that absorbs maximally in the far-red region. Photoconversion of Pr to Pfr induces an array of morphogenic responses, whereas reconversion of Pfr to Pr cancels the induction of those responses. Pfr controls the expression of a number of nuclear genes including those encoding the small subunit of ribulose-bisphosphate carboxylase, chlorophyll A/B binding protein, protochlorophyllide reductase, rRNA, etc. It also controls the expression of its own gene(s) in a negative feedback fashion. In Glycine max (Soybean), this protein is Phytochrome B-2.